A 348-amino-acid polypeptide reads, in one-letter code: D-alanine--D-alanine ligase (348 aa).

The ATP-grasp domain maps to 132-334; sequence KRVLESIGIP…YPDLIEELVT (203 aa). Position 162–217 (162–217) interacts with ATP; it reads LARLTFPIFVKPANMGSSVGISKAQTKVELRKAIQLALTYDSRVLIEQGVVAREIE. Mg(2+) is bound by residues Asp-288, Glu-301, and Asn-303.

This sequence belongs to the D-alanine--D-alanine ligase family. Mg(2+) serves as cofactor. The cofactor is Mn(2+).

It localises to the cytoplasm. The catalysed reaction is 2 D-alanine + ATP = D-alanyl-D-alanine + ADP + phosphate + H(+). It participates in cell wall biogenesis; peptidoglycan biosynthesis. Cell wall formation. The protein is D-alanine--D-alanine ligase of Streptococcus pyogenes serotype M6 (strain ATCC BAA-946 / MGAS10394).